The chain runs to 137 residues: Molluscan insulin-related peptide 2 (137 aa).

An N-terminal signal peptide occupies residues 1–31 (MVGVRLVFTNAFVVTVLLTLLLDVVVKPAEG). Residue Q32 is modified to Pyrrolidone carboxylic acid. 3 disulfides stabilise this stretch: C47-C123, C59-C136, and C122-C127. A propeptide spans 71–83 (DAETGWLLPETMV) (C-beta peptide like). A propeptide spans 86 to 110 (NAETDLDDPLRNIKLSSESALTYLT) (C-alpha peptide like). Residue Q113 is modified to Pyrrolidone carboxylic acid.

It belongs to the insulin family. Heterodimer of a B chain and an A chain linked by two disulfide bonds. Expressed in the cerebral light-green cells which are giant neuroendocrines cells involved in the control of growth.

The protein localises to the cytoplasmic vesicle. The protein resides in the secretory vesicle. The protein is Molluscan insulin-related peptide 2 of Lymnaea stagnalis (Great pond snail).